Reading from the N-terminus, the 396-residue chain is NADH-quinone oxidoreductase subunit D (396 aa).

This sequence belongs to the complex I 49 kDa subunit family. NDH-1 is composed of 14 different subunits. Subunits NuoB, C, D, E, F, and G constitute the peripheral sector of the complex.

Its subcellular location is the cell inner membrane. The enzyme catalyses a quinone + NADH + 5 H(+)(in) = a quinol + NAD(+) + 4 H(+)(out). Its function is as follows. NDH-1 shuttles electrons from NADH, via FMN and iron-sulfur (Fe-S) centers, to quinones in the respiratory chain. The immediate electron acceptor for the enzyme in this species is believed to be ubiquinone. Couples the redox reaction to proton translocation (for every two electrons transferred, four hydrogen ions are translocated across the cytoplasmic membrane), and thus conserves the redox energy in a proton gradient. The sequence is that of NADH-quinone oxidoreductase subunit D from Rhizobium johnstonii (strain DSM 114642 / LMG 32736 / 3841) (Rhizobium leguminosarum bv. viciae).